Reading from the N-terminus, the 754-residue chain is Circadian input-output histidine kinase CikA (754 aa).

The segment at 1–183 is N-terminal domain, not required to complement the deletion strain; that stretch reads MLAPSSNCSL…QVSAQIRLSL (183 aa). Residues 184–338 are GAF domain, required to complement the deletion strain; sequence DLSEILTTTI…RDILQHLAEH (155 aa). In terms of domain architecture, Histidine kinase spans 390-611; the sequence is TMSHELRTPL…TFTVWIPEQT (222 aa). Phosphohistidine; by autocatalysis is present on histidine 393. The psR domain, required to complement the deletion strain and for cell pole localization, attenuates autophosphorylation activity. Binds KaiB(fs) stretch occupies residues 606–754; it reads WIPEQTLIEP…NLSEGDRPSS (149 aa). Positions 629 to 742 constitute a Response regulatory domain; it reads HILLLEEEDE…LLLTTLQGLC (114 aa).

This sequence in the N-terminal section; belongs to the phytochrome family. Homodimer. Part of the circadian clock (KaiA, KaiB, KaiC, CikA, RpaA, SasA), the composition of which varies during the circadian cycle. Interacts with LdpA. KaiA and CikA compete for binding to KaiB(fs).

The protein resides in the cytoplasm. It is found in the membrane. The enzyme catalyses ATP + protein L-histidine = ADP + protein N-phospho-L-histidine.. Functions in an input pathway to the Kai circadian clock. Senses oxidized quinones via its C-terminal pseudo-receiver domain, providing a link between cell metabolism and the clock. Affects the ratio of phosphorylated to unphosphorylated KaiC, binds quinones via its pseudo-receptor domain. Quinone-binding destabilizes the protein rapidly. Autophosphorylates, does not transfer the phosphate to its pseudo-receiver (PsR) domain. May play a role in cell division, as suggested by its polar location and increased cell length in a deletion strain. Its function is as follows. Member of the two-component regulatory system CikA/RpaA output pathway from the circadian clock, negatively regulating kaiBC expression independently of labA and of sasA. One of three clock output pathways. Dephosphorylates phospho-RpaA, enhanced by KaiB and KaiC, has only modest kinase activity on RpaA. A very robust clock is reconstituted with KaiA, KaiB, KaiC, SasA, CikA and RpaA; output is measured by transcription from an appropriate reporter. The sequence is that of Circadian input-output histidine kinase CikA from Synechococcus elongatus (strain ATCC 33912 / PCC 7942 / FACHB-805) (Anacystis nidulans R2).